The following is a 517-amino-acid chain: GMP synthase [glutamine-hydrolyzing] (517 aa).

Residues 11–202 enclose the Glutamine amidotransferase type-1 domain; it reads KIIVLDFGSQ…AFDVCEAKAN (192 aa). The Nucleophile role is filled by Cys-88. Catalysis depends on residues His-176 and Glu-178. A GMPS ATP-PPase domain is found at 203–392; it reads WSMNDFIDMQ…LGMPEDLVWR (190 aa). Residue 230 to 236 coordinates ATP; the sequence is SGGVDSS.

As to quaternary structure, homodimer.

The catalysed reaction is XMP + L-glutamine + ATP + H2O = GMP + L-glutamate + AMP + diphosphate + 2 H(+). Its pathway is purine metabolism; GMP biosynthesis; GMP from XMP (L-Gln route): step 1/1. Catalyzes the synthesis of GMP from XMP. The sequence is that of GMP synthase [glutamine-hydrolyzing] from Pediococcus pentosaceus (strain ATCC 25745 / CCUG 21536 / LMG 10740 / 183-1w).